The chain runs to 68 residues: MPLPKIEDARKLNDQELADEIVAVKKQLFDLRLQQGTGRLEKTHEIKHARHRLALLMTVERQRQLQAQ.

The protein belongs to the universal ribosomal protein uL29 family.

In Picosynechococcus sp. (strain ATCC 27264 / PCC 7002 / PR-6) (Agmenellum quadruplicatum), this protein is Large ribosomal subunit protein uL29.